The primary structure comprises 531 residues: Bifunctional protein TrpGD (531 aa).

Positions 3–196 (DILLLDNIDS…LAWAQQKLEP (194 aa)) constitute a Glutamine amidotransferase type-1 domain. Position 57–59 (57–59 (GPG)) interacts with L-glutamine. Cys-84 serves as the catalytic Nucleophile; for GATase activity. L-glutamine contacts are provided by residues Gln-88 and 134–135 (SL). Active-site for GATase activity residues include His-170 and Glu-172. The anthranilate phosphoribosyltransferase stretch occupies residues 202 to 531 (PILEKLYQAQ…DRVTALAARG (330 aa)).

The protein in the C-terminal section; belongs to the anthranilate phosphoribosyltransferase family. As to quaternary structure, monomer. Heterotetramer consisting of two non-identical subunits: a beta subunit (TrpG) and a large alpha subunit (TrpE).

The catalysed reaction is chorismate + L-glutamine = anthranilate + pyruvate + L-glutamate + H(+). The enzyme catalyses N-(5-phospho-beta-D-ribosyl)anthranilate + diphosphate = 5-phospho-alpha-D-ribose 1-diphosphate + anthranilate. It functions in the pathway amino-acid biosynthesis; L-tryptophan biosynthesis; L-tryptophan from chorismate: step 1/5. It participates in amino-acid biosynthesis; L-tryptophan biosynthesis; L-tryptophan from chorismate: step 2/5. Cooperatively feedback inhibited by tryptophan. In terms of biological role, part of a heterotetrameric complex that catalyzes the two-step biosynthesis of anthranilate, an intermediate in the biosynthesis of L-tryptophan. In the first step, the glutamine-binding beta subunit (TrpG) of anthranilate synthase (AS) provides the glutamine amidotransferase activity which generates ammonia as a substrate that, along with chorismate, is used in the second step, catalyzed by the large alpha subunit of AS (TrpE) to produce anthranilate. In the absence of TrpG, TrpE can synthesize anthranilate directly from chorismate and high concentrations of ammonia. In addition to synthesizing anthranilate, it also catalyzes the second step of the pathway, the transfer of the phosphoribosyl group of 5-phosphorylribose-1-pyrophosphate (PRPP) to anthranilate. The protein is Bifunctional protein TrpGD (trpGD) of Salmonella typhimurium (strain LT2 / SGSC1412 / ATCC 700720).